The primary structure comprises 921 residues: Retinoblastoma-associated protein (921 aa).

The interval 1–36 (MPPKAPRRAAAAEPPPPPPPPPREDDPAQDSGPEEL) is disordered. Residue Pro-2 is modified to N,N-dimethylproline; by NTM1. Ser-31 and Ser-243 each carry phosphoserine. Residues Thr-246, Thr-350, Thr-364, and Thr-367 each carry the phosphothreonine modification. The tract at residues 341 to 360 (PIDSFETERTPRKNNPDEEA) is disordered. Over residues 346-356 (ETERTPRKNNP) the composition is skewed to basic and acidic residues. Residues 367–573 (TPVRTVMNTI…FDLIKQSKDG (207 aa)) form a domain A region. The segment at 367–764 (TPVRTVMNTI…QRLKTNILQY (398 aa)) is pocket; binds T and E1A. The residue at position 561 (Ser-561) is a Phosphoserine; by CDK2. The interval 574–632 (EGPDNLEPACPLSLPLQGNHTAADMYLSPLRSPKKRTSTTRVNSAANTETQAASAFHTQ) is spacer. Phosphoserine occurs at positions 601, 605, and 617. The segment at 633–764 (KPLKSTSLAL…QRLKTNILQY (132 aa)) is domain B. Residues 756-921 (RLKTNILQYA…SKDVSNKEEK (166 aa)) are interaction with LIMD1. Residues 764–921 (YASTRPPTLS…SKDVSNKEEK (158 aa)) are domain; mediates interaction with E4F1. Ser-773, Ser-781, Ser-788, and Ser-800 each carry phosphoserine. Lys-803 is modified (N6-methyllysine; by SMYD2). At Ser-804 the chain carries Phosphoserine. Phosphothreonine occurs at positions 814, 816, 819, and 834. Ser-848 carries the phosphoserine modification. Lys-853 carries the N6-methyllysine; by SMYD2 modification. The Bipartite nuclear localization signal signature appears at 853 to 869 (KRSAEGGNPPKPLKKLR). N6-acetyllysine; by PCAF is present on residues Lys-866 and Lys-867. The disordered stretch occupies residues 872–921 (IEGADEADGSKHLPAESKFQQKLAEMTSTRTRMQKQRMNESKDVSNKEEK). Residues 908–921 (RMNESKDVSNKEEK) show a composition bias toward basic and acidic residues.

It belongs to the retinoblastoma protein (RB) family. As to quaternary structure, the hypophosphorylated form interacts with and sequesters the E2F1 transcription factor, thereby inhibiting E2F1 transcription. Interacts with heterodimeric E2F/DP transcription factor complexes containing TFDP1 and either E2F1/E2F, E2F3, E2F4 or E2F5, or TFDP2 and E2F4. Interacts (when hyperphosphorylated and hypophosphorylated) with PKP3; the interaction inhibits RB1 interaction with and repression of the transcription factor E2F1, potentially via sequestering RB1 to the cytoplasm. The unphosphorylated form interacts with EID1, ARID3B, KDM5A, SUV39H1, MJD2A/JHDM3A and THOC1. Interacts with the N-terminal domain of TAF1. Interacts with SNW1, ATAD5, AATF, DNMT1, LIN9, LMNA, KMT5B, KMT5C, PELP1, UHRF2, TMPO-alpha and USP4. Interacts with GRIP1 and UBR4. Interacts with ARID4A and KDM5B. Interacts with E4F1 and LIMD1. Interacts with SMARCA4/BRG1 and HDAC1. Interacts with USP4. Interacts (when methylated at Lys-853) with L3MBTL1. Binds to CDK1 and CDK2. Interacts with CHEK2; phosphorylates RB1. Interacts with PRMT2. Interacts with CEBPA. P-TEFB complex interacts with RB1; promotes phosphorylation of RB1. Interacts with RBBP9; the interaction disrupts RB1 binding to E2F1. Interacts with KAT2B/PCAF and EP300/P300. Interacts with PAX5. Interacts (phosphorylated and unphosphorylated) with BLCAP. May interact with NDC80. In terms of assembly, (Microbial infection) Interacts with adenovirus E1a protein. (Microbial infection) Interacts with SV40 large T antigen. In terms of processing, phosphorylated. Phosphorylated by CDK6 and CDK4, and subsequently by CDK2 at Ser-561 in G1, thereby releasing E2F1 which is then able to activate cell growth. Dephosphorylated at the late M phase. Phosphorylation of threonine residues in domain C promotes interaction between the C-terminal domain C and the Pocket domain, and thereby inhibits interactions with heterodimeric E2F/DP transcription factor complexes. Dephosphorylated at Ser-788 by calcineruin upon calcium stimulation. CDK3/cyclin-C-mediated phosphorylation at Ser-800 and Ser-804 is required for G0-G1 transition. Phosphorylated by CDK1 and CDK2 upon TGFB1-mediated apoptosis. Monomethylation at Lys-803 by SMYD2 enhances phosphorylation at Ser-800 and Ser-804, and promotes cell cycle progression. Monomethylation at Lys-853 by SMYD2 promotes interaction with L3MBTL1. N-terminus is methylated by METTL11A/NTM1. Post-translationally, acetylated in the skin. Acetylation at Lys-866 and Lys-867 regulates subcellular localization during keratinocytes differentiation. In terms of tissue distribution, expressed in the cell nuclei of renal tubules, hepatocytes and skeletal muscles. Expressed in skin (at protein level).

Its subcellular location is the nucleus. The protein resides in the cytoplasm. Its function is as follows. Tumor suppressor that is a key regulator of the G1/S transition of the cell cycle. The hypophosphorylated form binds transcription regulators of the E2F family, preventing transcription of E2F-responsive genes. Both physically blocks E2Fs transactivating domain and recruits chromatin-modifying enzymes that actively repress transcription. Cyclin and CDK-dependent phosphorylation of RB1 induces its dissociation from E2Fs, thereby activating transcription of E2F responsive genes and triggering entry into S phase. RB1 also promotes the G0-G1 transition upon phosphorylation and activation by CDK3/cyclin-C. Directly involved in heterochromatin formation by maintaining overall chromatin structure and, in particular, that of constitutive heterochromatin by stabilizing histone methylation. Recruits and targets histone methyltransferases SUV39H1, KMT5B and KMT5C, leading to epigenetic transcriptional repression. Controls histone H4 'Lys-20' trimethylation. Inhibits the intrinsic kinase activity of TAF1. Mediates transcriptional repression by SMARCA4/BRG1 by recruiting a histone deacetylase (HDAC) complex to the c-FOS promoter. In resting neurons, transcription of the c-FOS promoter is inhibited by BRG1-dependent recruitment of a phospho-RB1-HDAC1 repressor complex. Upon calcium influx, RB1 is dephosphorylated by calcineurin, which leads to release of the repressor complex. In Mus musculus (Mouse), this protein is Retinoblastoma-associated protein (Rb1).